The sequence spans 112 residues: Transcriptional regulator WhiD (112 aa).

Positions 22 to 86 (ACRGVDSSLF…GGLTEDEREE (65 aa)) constitute a 4Fe-4S Wbl-type domain. 4 residues coordinate [4Fe-4S] cluster: C23, C53, C56, and C62.

This sequence belongs to the WhiB family. The 4Fe-4S form is a monomer; upon oxidation forms a disulfide-bonded homodimer. [4Fe-4S] cluster serves as cofactor. Post-translationally, can be nitrosylated by NO, 8 NO react per cluster. These complexes are quite stable under anaerobic conditions, but degrade slowly aerobically. In terms of processing, upon Fe-S cluster removal intramolecular disulfide bonds are formed.

It localises to the cytoplasm. Functionally, acts as a transcriptional regulator. Probably redox-responsive. The apo- but not holo-form probably binds DNA. Plays a positive role in prespore maturation and the initiation of sporulation septation. This is Transcriptional regulator WhiD (whiD) from Streptomyces coelicolor (strain ATCC BAA-471 / A3(2) / M145).